We begin with the raw amino-acid sequence, 365 residues long: Anhydro-N-acetylmuramic acid kinase (365 aa).

12–19 is an ATP binding site; sequence GTSMDGMD.

Belongs to the anhydro-N-acetylmuramic acid kinase family.

It carries out the reaction 1,6-anhydro-N-acetyl-beta-muramate + ATP + H2O = N-acetyl-D-muramate 6-phosphate + ADP + H(+). It functions in the pathway amino-sugar metabolism; 1,6-anhydro-N-acetylmuramate degradation. The protein operates within cell wall biogenesis; peptidoglycan recycling. Functionally, catalyzes the specific phosphorylation of 1,6-anhydro-N-acetylmuramic acid (anhMurNAc) with the simultaneous cleavage of the 1,6-anhydro ring, generating MurNAc-6-P. Is required for the utilization of anhMurNAc either imported from the medium or derived from its own cell wall murein, and thus plays a role in cell wall recycling. The polypeptide is Anhydro-N-acetylmuramic acid kinase (Pseudomonas paraeruginosa (strain DSM 24068 / PA7) (Pseudomonas aeruginosa (strain PA7))).